Here is a 422-residue protein sequence, read N- to C-terminus: Enolase (422 aa).

Q162 contacts (2R)-2-phosphoglycerate. E204 serves as the catalytic Proton donor. Residues D241, E284, and D311 each coordinate Mg(2+). Positions 336, 365, 366, and 387 each coordinate (2R)-2-phosphoglycerate. K336 serves as the catalytic Proton acceptor.

This sequence belongs to the enolase family. Component of the RNA degradosome, a multiprotein complex involved in RNA processing and mRNA degradation. The cofactor is Mg(2+).

Its subcellular location is the cytoplasm. The protein localises to the secreted. The protein resides in the cell surface. It catalyses the reaction (2R)-2-phosphoglycerate = phosphoenolpyruvate + H2O. It participates in carbohydrate degradation; glycolysis; pyruvate from D-glyceraldehyde 3-phosphate: step 4/5. Catalyzes the reversible conversion of 2-phosphoglycerate (2-PG) into phosphoenolpyruvate (PEP). It is essential for the degradation of carbohydrates via glycolysis. The chain is Enolase from Legionella pneumophila (strain Paris).